The sequence spans 120 residues: NAD(P)H-quinone oxidoreductase subunit 3 (120 aa).

3 helical membrane-spanning segments follow: residues 6-26, 64-84, and 89-109; these read GYDA…LALV, MFAL…PWAV, and LGLL…VALA.

Belongs to the complex I subunit 3 family. As to quaternary structure, NDH-1 can be composed of about 15 different subunits; different subcomplexes with different compositions have been identified which probably have different functions.

It localises to the cellular thylakoid membrane. It carries out the reaction a plastoquinone + NADH + (n+1) H(+)(in) = a plastoquinol + NAD(+) + n H(+)(out). It catalyses the reaction a plastoquinone + NADPH + (n+1) H(+)(in) = a plastoquinol + NADP(+) + n H(+)(out). Functionally, NDH-1 shuttles electrons from an unknown electron donor, via FMN and iron-sulfur (Fe-S) centers, to quinones in the respiratory and/or the photosynthetic chain. The immediate electron acceptor for the enzyme in this species is believed to be plastoquinone. Couples the redox reaction to proton translocation, and thus conserves the redox energy in a proton gradient. Cyanobacterial NDH-1 also plays a role in inorganic carbon-concentration. The protein is NAD(P)H-quinone oxidoreductase subunit 3 of Prochlorococcus marinus (strain MIT 9313).